A 388-amino-acid chain; its full sequence is S-adenosylmethionine synthase (388 aa).

H16 contacts ATP. Residue D18 coordinates Mg(2+). E44 is a binding site for K(+). E57 and Q100 together coordinate L-methionine. The flexible loop stretch occupies residues 100-110 (QSPEIAQGVDR). Residues 165 to 167 (DAK), 231 to 232 (KF), D240, 246 to 247 (RK), A263, and K267 each bind ATP. Residue D240 participates in L-methionine binding. Residue K271 coordinates L-methionine.

The protein belongs to the AdoMet synthase family. Homotetramer; dimer of dimers. Mg(2+) serves as cofactor. K(+) is required as a cofactor.

Its subcellular location is the cytoplasm. The catalysed reaction is L-methionine + ATP + H2O = S-adenosyl-L-methionine + phosphate + diphosphate. It functions in the pathway amino-acid biosynthesis; S-adenosyl-L-methionine biosynthesis; S-adenosyl-L-methionine from L-methionine: step 1/1. Catalyzes the formation of S-adenosylmethionine (AdoMet) from methionine and ATP. The overall synthetic reaction is composed of two sequential steps, AdoMet formation and the subsequent tripolyphosphate hydrolysis which occurs prior to release of AdoMet from the enzyme. This chain is S-adenosylmethionine synthase, found in Psychrobacter arcticus (strain DSM 17307 / VKM B-2377 / 273-4).